The primary structure comprises 284 residues: Citrate lyase subunit beta-like protein (284 aa).

The substrate site is built by arginine 74 and glutamate 129. Mg(2+) contacts are provided by glutamate 129 and aspartate 155.

This sequence belongs to the HpcH/HpaI aldolase family. Citrate lyase beta subunit-like subfamily. As to quaternary structure, homotrimer. Mg(2+) serves as cofactor.

May play a role in fatty acid biosynthesis. This is Citrate lyase subunit beta-like protein from Deinococcus radiodurans (strain ATCC 13939 / DSM 20539 / JCM 16871 / CCUG 27074 / LMG 4051 / NBRC 15346 / NCIMB 9279 / VKM B-1422 / R1).